The chain runs to 478 residues: Pyrrolysine--tRNA ligase (478 aa).

The interval 106 to 188 is disordered; the sequence is VMPKSVARTP…TSAMPASTSA (83 aa). A compositionally biased stretch (polar residues) spans 122–132; that stretch reads APVQTLPSESQ. A compositionally biased stretch (low complexity) spans 133–188; the sequence is PAPTTPISASTTAPASTSTTAPAPASTTAPAPASTTAPASASTTISTSAMPASTSA.

It belongs to the class-II aminoacyl-tRNA synthetase family.

The protein resides in the cytoplasm. The catalysed reaction is tRNA(Pyl) + L-pyrrolysine + ATP = L-pyrrolysyl-tRNA(Pyl) + AMP + diphosphate. Catalyzes the attachment of pyrrolysine to tRNA(Pyl). Pyrrolysine is a lysine derivative encoded by the termination codon UAG. This chain is Pyrrolysine--tRNA ligase, found in Methanosarcina thermophila.